Reading from the N-terminus, the 326-residue chain is Tetraacyldisaccharide 4'-kinase (326 aa).

55-62 is a binding site for ATP; that stretch reads TAGGNGKT.

This sequence belongs to the LpxK family.

The enzyme catalyses a lipid A disaccharide + ATP = a lipid IVA + ADP + H(+). It functions in the pathway glycolipid biosynthesis; lipid IV(A) biosynthesis; lipid IV(A) from (3R)-3-hydroxytetradecanoyl-[acyl-carrier-protein] and UDP-N-acetyl-alpha-D-glucosamine: step 6/6. Transfers the gamma-phosphate of ATP to the 4'-position of a tetraacyldisaccharide 1-phosphate intermediate (termed DS-1-P) to form tetraacyldisaccharide 1,4'-bis-phosphate (lipid IVA). The sequence is that of Tetraacyldisaccharide 4'-kinase from Serratia proteamaculans (strain 568).